Consider the following 453-residue polypeptide: mRNA cleavage and polyadenylation factor CLP1 (453 aa).

ATP is bound by residues E31, K70, and 146–151 (NSGKTS).

It belongs to the Clp1 family. Clp1 subfamily. As to quaternary structure, component of a pre-mRNA cleavage factor complex. Interacts directly with PCF11.

It is found in the nucleus. Its function is as follows. Required for endonucleolytic cleavage during polyadenylation-dependent pre-mRNA 3'-end formation. The chain is mRNA cleavage and polyadenylation factor CLP1 from Scheffersomyces stipitis (strain ATCC 58785 / CBS 6054 / NBRC 10063 / NRRL Y-11545) (Yeast).